The sequence spans 243 residues: Juxtaposed with another zinc finger protein 1 (243 aa).

The C2H2-type 1 zinc finger occupies 12–37 (NTCRFGGCGLHFPTLADLIEHIEDNH). Residues 39–79 (DTDPRVLEKQELQQPTYVALSYINRFMTDAARREQESLKKK) form a required for interaction with NR2C2 region. The segment covering 89–108 (SSSVSRGNVSTPPRHSSGSL) has biased composition (polar residues). A disordered region spans residues 89–151 (SSSVSRGNVS…SDSDESWTTE (63 aa)). Residues T109 and T113 each carry the phosphothreonine modification. Over residues 118 to 130 (PSSSFRSSTPTGS) the composition is skewed to low complexity. Acidic residues predominate over residues 131–148 (EYDEEEVDYEESDSDESW). A C2H2-type 2 zinc finger spans residues 173–198 (FACPVPGCKKRYKNVNGIKYHAKNGH). A C2H2-type 3; degenerate zinc finger spans residues 208–230 (FKCRCGKSYKTAQGLRHHTINFH).

Interacts with NR2C2 (via ligand-binding region). As to expression, expressed in range of tissues with highest expression levels in testis, liver, muscle and fat and lowest levels in kidney. Detected in liver and white adipose tissue (at protein level).

It is found in the nucleus. Its function is as follows. Acts as a transcriptional corepressor of orphan nuclear receptor NR2C2. Inhibits expression of the gluconeogenesis enzyme PCK2 through inhibition of NR2C2 activity. Also involved in transcriptional activation of NAMPT by promoting expression of PPARA and PPARD. Plays a role in lipid metabolism by suppressing lipogenesis, increasing lipolysis and decreasing lipid accumulation in adipose tissue. Plays a role in glucose homeostasis by improving glucose metabolism and insulin sensitivity. In Mus musculus (Mouse), this protein is Juxtaposed with another zinc finger protein 1 (Jazf1).